We begin with the raw amino-acid sequence, 948 residues long: Hexagonally packed intermediate-layer surface protein (948 aa).

The signal sequence occupies residues 1–17 (MKKNIALMALTGILTLA). Intrachain disulfides connect C168/C187 and C554/C666.

In terms of processing, glycosylated. Contains tightly bound reducing sugars (six per polypeptide chain) and fatty acids (covalently bound and located in the N-terminal region).

The protein resides in the secreted. Its subcellular location is the cell wall. The protein localises to the S-layer. Its function is as follows. Shape maintenance, possible protection from noxious enzymes or exogenous and unsettling DNA, and may mediate homotypic cell-cell contacts. This chain is Hexagonally packed intermediate-layer surface protein (hpi), found in Deinococcus radiodurans (strain ATCC 13939 / DSM 20539 / JCM 16871 / CCUG 27074 / LMG 4051 / NBRC 15346 / NCIMB 9279 / VKM B-1422 / R1).